A 96-amino-acid polypeptide reads, in one-letter code: (4S)-4-hydroxy-5-phosphonooxypentane-2,3-dione isomerase (96 aa).

The ABM domain occupies His2 to Phe91.

Belongs to the LsrG family. Homodimer.

It localises to the cytoplasm. The catalysed reaction is (2S)-2-hydroxy-3,4-dioxopentyl phosphate = 3-hydroxy-2,4-dioxopentyl phosphate. Functionally, involved in the degradation of phospho-AI-2, thereby terminating induction of the lsr operon and closing the AI-2 signaling cycle. Catalyzes the conversion of (4S)-4-hydroxy-5-phosphonooxypentane-2,3-dione (P-DPD) to 3-hydroxy-5-phosphonooxypentane-2,4-dione (P-HPD). The protein is (4S)-4-hydroxy-5-phosphonooxypentane-2,3-dione isomerase of Salmonella choleraesuis (strain SC-B67).